Consider the following 444-residue polypeptide: Exodeoxyribonuclease 7 large subunit (444 aa).

This sequence belongs to the XseA family. In terms of assembly, heterooligomer composed of large and small subunits.

Its subcellular location is the cytoplasm. The enzyme catalyses Exonucleolytic cleavage in either 5'- to 3'- or 3'- to 5'-direction to yield nucleoside 5'-phosphates.. Functionally, bidirectionally degrades single-stranded DNA into large acid-insoluble oligonucleotides, which are then degraded further into small acid-soluble oligonucleotides. The chain is Exodeoxyribonuclease 7 large subunit from Hahella chejuensis (strain KCTC 2396).